The primary structure comprises 296 residues: Probable AP endonuclease (296 aa).

Residues Cys-16 and Cys-20 are joined by a disulfide bond. The Zn(2+) site is built by His-78, His-115, Glu-142, His-182, His-218, Asp-231, His-233, and Glu-271.

The protein belongs to the AP endonuclease 2 family. Zn(2+) serves as cofactor.

Its subcellular location is the host nucleus. It is found in the host cytoplasm. The protein localises to the virion. Endonuclease that plays a role in DNA repair. Cleaves phosphodiester bonds on the 5' side of apurinic or apyrimidinic sites (AP sites). In addition to endonuclease activity, the ASFV enzyme has a proofreading 3'-5' exonuclease activity that is considerably more efficient in the elimination of a mismatch than in that of a correctly paired base. Displays 3'-phosphatase and 3'-repair diesterase activities. The single nucleotide gaps generated by the AP endonuclease are filled by the viral AP endonuclease and DNA ligase. The protein is Probable AP endonuclease of Ornithodoros (relapsing fever ticks).